Reading from the N-terminus, the 396-residue chain is S-adenosylmethionine synthase (396 aa).

H15 serves as a coordination point for ATP. D17 serves as a coordination point for Mg(2+). E43 is a binding site for K(+). Residues E56 and Q99 each contribute to the L-methionine site. The segment at 99–109 (QSADIALGVDR) is flexible loop. ATP contacts are provided by residues 175–177 (DGK), 241–242 (RF), D250, 256–257 (RK), A273, and K277. D250 is an L-methionine binding site. K281 is an L-methionine binding site.

It belongs to the AdoMet synthase family. As to quaternary structure, homotetramer; dimer of dimers. Mg(2+) serves as cofactor. The cofactor is K(+).

It localises to the cytoplasm. It catalyses the reaction L-methionine + ATP + H2O = S-adenosyl-L-methionine + phosphate + diphosphate. It functions in the pathway amino-acid biosynthesis; S-adenosyl-L-methionine biosynthesis; S-adenosyl-L-methionine from L-methionine: step 1/1. Its function is as follows. Catalyzes the formation of S-adenosylmethionine (AdoMet) from methionine and ATP. The overall synthetic reaction is composed of two sequential steps, AdoMet formation and the subsequent tripolyphosphate hydrolysis which occurs prior to release of AdoMet from the enzyme. The polypeptide is S-adenosylmethionine synthase (Desulfitobacterium hafniense (strain DSM 10664 / DCB-2)).